A 272-amino-acid chain; its full sequence is Cell shape-determining protein MreC (272 aa).

The Cytoplasmic portion of the chain corresponds to 1–8; it reads MNRFKKSK. A helical transmembrane segment spans residues 9-29; sequence YVIIVFVTVLLVSALLATTYS. At 30 to 272 the chain is on the extracellular side; it reads STIVTKLGDG…VDVIELVGNS (243 aa). A coiled-coil region spans residues 64–112; the sequence is LTRTYNENESLKKQLYQLEVKSNEVESLKTENEQLRQLLDMKSKLQATK.

It belongs to the MreC family. Homodimer. Interacts with a number of proteins in the elongasome, including PBP1a (pbpA), PBP1b, PBP2a, PBP2b (penA), StkP, MltG, MreD and RodZ.

The protein resides in the cell membrane. Its function is as follows. Involved in formation and maintenance of cell shape, probably part of the elongasome which synthesizes peripheral peptidoglycan (PG). The chain is Cell shape-determining protein MreC from Streptococcus pneumoniae (strain ATCC BAA-255 / R6).